A 350-amino-acid polypeptide reads, in one-letter code: Streptomycin biosynthesis operon possible regulatory protein (350 aa).

Residues 1 to 10 (MEHISGNSPE) show a composition bias toward polar residues. Disordered regions lie at residues 1–20 (MEHISGNSPEQVRERSAAVT), 168–189 (AGVPQSNVRIGRDGRARPLDPT), and 211–258 (AAQA…SRAD). Composition is skewed to basic and acidic residues over residues 177-189 (IGRDGRARPLDPT) and 223-242 (DVRKRLSRGESPLPERDRQQ).

In Streptomyces griseus, this protein is Streptomycin biosynthesis operon possible regulatory protein (strR).